The chain runs to 396 residues: Serine/threonine-protein kinase 32A (396 aa).

A lipid anchor (N-myristoyl glycine) is attached at Gly-2. A Protein kinase domain is found at 23–281 (FEILRAIGKG…LSDVQNFPYM (259 aa)). Residues 29 to 37 (IGKGSFGKV) and Lys-52 each bind ATP. Asp-146 serves as the catalytic Proton acceptor. A disordered region spans residues 373 to 396 (KRQPNLALEQTKDPQGEDGQNNNL).

This sequence belongs to the protein kinase superfamily. Ser/Thr protein kinase family. Mg(2+) serves as cofactor.

It localises to the cell membrane. The enzyme catalyses L-seryl-[protein] + ATP = O-phospho-L-seryl-[protein] + ADP + H(+). The catalysed reaction is L-threonyl-[protein] + ATP = O-phospho-L-threonyl-[protein] + ADP + H(+). The polypeptide is Serine/threonine-protein kinase 32A (STK32A) (Homo sapiens (Human)).